A 216-amino-acid chain; its full sequence is Imidazole glycerol phosphate synthase subunit HisH (216 aa).

One can recognise a Glutamine amidotransferase type-1 domain in the interval 2–216 (RVAIIDYGSG…LIANFLKWKP (215 aa)). The active-site Nucleophile is the cysteine 88. Active-site residues include histidine 196 and glutamate 198.

Heterodimer of HisH and HisF.

Its subcellular location is the cytoplasm. It catalyses the reaction 5-[(5-phospho-1-deoxy-D-ribulos-1-ylimino)methylamino]-1-(5-phospho-beta-D-ribosyl)imidazole-4-carboxamide + L-glutamine = D-erythro-1-(imidazol-4-yl)glycerol 3-phosphate + 5-amino-1-(5-phospho-beta-D-ribosyl)imidazole-4-carboxamide + L-glutamate + H(+). The catalysed reaction is L-glutamine + H2O = L-glutamate + NH4(+). It participates in amino-acid biosynthesis; L-histidine biosynthesis; L-histidine from 5-phospho-alpha-D-ribose 1-diphosphate: step 5/9. Its function is as follows. IGPS catalyzes the conversion of PRFAR and glutamine to IGP, AICAR and glutamate. The HisH subunit catalyzes the hydrolysis of glutamine to glutamate and ammonia as part of the synthesis of IGP and AICAR. The resulting ammonia molecule is channeled to the active site of HisF. This chain is Imidazole glycerol phosphate synthase subunit HisH, found in Brucella suis biovar 1 (strain 1330).